A 146-amino-acid polypeptide reads, in one-letter code: UPF0260 protein SO_2573 (146 aa).

Belongs to the UPF0260 family.

In Shewanella oneidensis (strain ATCC 700550 / JCM 31522 / CIP 106686 / LMG 19005 / NCIMB 14063 / MR-1), this protein is UPF0260 protein SO_2573.